The sequence spans 425 residues: Tyrosine--tRNA ligase (425 aa).

Tyr-34 is an L-tyrosine binding site. A 'HIGH' region motif is present at residues 39–48 (PTADSLHVGN). Tyr-171 and Gln-175 together coordinate L-tyrosine. Residues 231–235 (KYGKS) carry the 'KMSKS' region motif. Lys-234 lines the ATP pocket. The region spanning 358–424 (APLVELLVHA…GKRTYTVVKI (67 aa)) is the S4 RNA-binding domain.

Belongs to the class-I aminoacyl-tRNA synthetase family. TyrS type 1 subfamily. As to quaternary structure, homodimer.

It is found in the cytoplasm. The catalysed reaction is tRNA(Tyr) + L-tyrosine + ATP = L-tyrosyl-tRNA(Tyr) + AMP + diphosphate + H(+). Functionally, catalyzes the attachment of tyrosine to tRNA(Tyr) in a two-step reaction: tyrosine is first activated by ATP to form Tyr-AMP and then transferred to the acceptor end of tRNA(Tyr). The protein is Tyrosine--tRNA ligase of Opitutus terrae (strain DSM 11246 / JCM 15787 / PB90-1).